Reading from the N-terminus, the 365-residue chain is Protein RecA (365 aa).

ATP is bound at residue 81-88 (GPESSGKT).

It belongs to the RecA family.

The protein resides in the cytoplasm. In terms of biological role, can catalyze the hydrolysis of ATP in the presence of single-stranded DNA, the ATP-dependent uptake of single-stranded DNA by duplex DNA, and the ATP-dependent hybridization of homologous single-stranded DNAs. It interacts with LexA causing its activation and leading to its autocatalytic cleavage. This is Protein RecA from Borreliella burgdorferi (strain ATCC 35210 / DSM 4680 / CIP 102532 / B31) (Borrelia burgdorferi).